We begin with the raw amino-acid sequence, 431 residues long: Glucose-1-phosphate adenylyltransferase (431 aa).

K39 is a binding site for beta-D-fructose 1,6-bisphosphate. R40, H46, and R52 together coordinate AMP. Y114 is a binding site for alpha-D-glucose 1-phosphate. Position 130 (R130) interacts with AMP. Residues G179, 194 to 195, and S212 contribute to the alpha-D-glucose 1-phosphate site; that span reads EK. Residues E370 and R386 each coordinate AMP. Beta-D-fructose 1,6-bisphosphate-binding positions include 419-423 and 429-431; these read REMLR and QER.

This sequence belongs to the bacterial/plant glucose-1-phosphate adenylyltransferase family. Homotetramer.

It catalyses the reaction alpha-D-glucose 1-phosphate + ATP + H(+) = ADP-alpha-D-glucose + diphosphate. The protein operates within glycan biosynthesis; glycogen biosynthesis. Its activity is regulated as follows. Allosterically activated by fructose-1,6-bisphosphate (F16BP) and inhibited by AMP. Its function is as follows. Involved in the biosynthesis of ADP-glucose, a building block required for the elongation reactions to produce glycogen. Catalyzes the reaction between ATP and alpha-D-glucose 1-phosphate (G1P) to produce pyrophosphate and ADP-Glc. This chain is Glucose-1-phosphate adenylyltransferase, found in Escherichia coli O7:K1 (strain IAI39 / ExPEC).